A 156-amino-acid polypeptide reads, in one-letter code: MPRRREVEKRKILPDPKFQDRIVAKFVNNLMRKGKKSTGERIIYGAFDQVEAKLKDDPLKVFKKALDNVKPVVEVKSRRVGGATYQVPVEVRQDRRTALAMRWLIDYSRGRGEKTMVEKLAGEIMDAASNRGNAVKKREDTHKMAEANKAFAHYRW.

This sequence belongs to the universal ribosomal protein uS7 family. Part of the 30S ribosomal subunit. Contacts proteins S9 and S11.

In terms of biological role, one of the primary rRNA binding proteins, it binds directly to 16S rRNA where it nucleates assembly of the head domain of the 30S subunit. Is located at the subunit interface close to the decoding center, probably blocks exit of the E-site tRNA. In Anaeromyxobacter dehalogenans (strain 2CP-C), this protein is Small ribosomal subunit protein uS7.